The following is a 228-amino-acid chain: Ribulose-phosphate 3-epimerase (228 aa).

Residue serine 9 coordinates substrate. Positions 34, 36, 68, and 177 each coordinate a divalent metal cation. Aspartate 36 acts as the Proton acceptor in catalysis. Substrate contacts are provided by residues histidine 68, 177 to 179 (DGG), and 199 to 200 (GS). Aspartate 177 serves as the catalytic Proton donor.

This sequence belongs to the ribulose-phosphate 3-epimerase family. Requires a divalent metal cation as cofactor.

The catalysed reaction is D-ribulose 5-phosphate = D-xylulose 5-phosphate. The protein operates within carbohydrate degradation. Catalyzes the reversible epimerization of D-ribulose 5-phosphate to D-xylulose 5-phosphate. The polypeptide is Ribulose-phosphate 3-epimerase (Buchnera aphidicola subsp. Schizaphis graminum (strain Sg)).